We begin with the raw amino-acid sequence, 424 residues long: Probable methyltransferase EP424R (424 aa).

Residues 104-316 enclose the Adrift-type SAM-dependent 2'-O-MTase domain; it reads QIVTNAWLKM…TYIVGKNRLR (213 aa). 2 residues coordinate S-adenosyl-L-methionine: Gly136 and Asp229. The active-site Proton acceptor is the Lys269.

Its subcellular location is the virion. This African swine fever virus (strain Badajoz 1971 Vero-adapted) (Ba71V) protein is Probable methyltransferase EP424R.